Reading from the N-terminus, the 266-residue chain is Protein crossbronx-like (266 aa).

Residues 15 to 178 (KQGYHILAEY…VQEQAILSRN (164 aa)) enclose the UBC core domain. The interval 234–266 (SSRQLDEEEANQVEKLHRGRIPEHQREESEVSL) is disordered. Residues 245–266 (QVEKLHRGRIPEHQREESEVSL) show a composition bias toward basic and acidic residues.

This sequence belongs to the ubiquitin-conjugating enzyme family. FTS subfamily.

The chain is Protein crossbronx-like from Drosophila melanogaster (Fruit fly).